Consider the following 374-residue polypeptide: Putative glutamate--cysteine ligase 2 (374 aa).

Belongs to the glutamate--cysteine ligase type 2 family. YbdK subfamily.

The enzyme catalyses L-cysteine + L-glutamate + ATP = gamma-L-glutamyl-L-cysteine + ADP + phosphate + H(+). In terms of biological role, ATP-dependent carboxylate-amine ligase which exhibits weak glutamate--cysteine ligase activity. The sequence is that of Putative glutamate--cysteine ligase 2 from Acidovorax ebreus (strain TPSY) (Diaphorobacter sp. (strain TPSY)).